Reading from the N-terminus, the 553-residue chain is CTP synthase (553 aa).

The tract at residues 1–266 is amidoligase domain; the sequence is MKYIFVTGGV…GKAVEDLLGL (266 aa). A CTP-binding site is contributed by serine 12. Position 12 (serine 12) interacts with UTP. 13 to 18 is an ATP binding site; it reads SLGKGV. Tyrosine 53 provides a ligand contact to L-glutamine. Residue aspartate 70 participates in ATP binding. Mg(2+) is bound by residues aspartate 70 and glutamate 140. CTP is bound by residues 147–149, 187–192, and lysine 223; these read DIE and KTKPTQ. Residues 187 to 192 and lysine 223 each bind UTP; that span reads KTKPTQ. The region spanning 291–541 is the Glutamine amidotransferase type-1 domain; sequence TIAIAGKYTE…VAAALQSGPS (251 aa). Glycine 353 provides a ligand contact to L-glutamine. Cysteine 380 serves as the catalytic Nucleophile; for glutamine hydrolysis. L-glutamine-binding positions include 381 to 384, glutamate 404, and arginine 464; that span reads LGMQ. Catalysis depends on residues histidine 514 and glutamate 516.

Belongs to the CTP synthase family. In terms of assembly, homotetramer.

The enzyme catalyses UTP + L-glutamine + ATP + H2O = CTP + L-glutamate + ADP + phosphate + 2 H(+). The catalysed reaction is L-glutamine + H2O = L-glutamate + NH4(+). It catalyses the reaction UTP + NH4(+) + ATP = CTP + ADP + phosphate + 2 H(+). It functions in the pathway pyrimidine metabolism; CTP biosynthesis via de novo pathway; CTP from UDP: step 2/2. Allosterically activated by GTP, when glutamine is the substrate; GTP has no effect on the reaction when ammonia is the substrate. The allosteric effector GTP functions by stabilizing the protein conformation that binds the tetrahedral intermediate(s) formed during glutamine hydrolysis. Inhibited by the product CTP, via allosteric rather than competitive inhibition. In terms of biological role, catalyzes the ATP-dependent amination of UTP to CTP with either L-glutamine or ammonia as the source of nitrogen. Regulates intracellular CTP levels through interactions with the four ribonucleotide triphosphates. The chain is CTP synthase from Deinococcus geothermalis (strain DSM 11300 / CIP 105573 / AG-3a).